We begin with the raw amino-acid sequence, 188 residues long: Peptidyl-tRNA hydrolase (188 aa).

Phe-15 serves as a coordination point for tRNA. His-20 functions as the Proton acceptor in the catalytic mechanism. 3 residues coordinate tRNA: Tyr-64, Asn-66, and Asn-112.

It belongs to the PTH family. Monomer.

It localises to the cytoplasm. It carries out the reaction an N-acyl-L-alpha-aminoacyl-tRNA + H2O = an N-acyl-L-amino acid + a tRNA + H(+). Hydrolyzes ribosome-free peptidyl-tRNAs (with 1 or more amino acids incorporated), which drop off the ribosome during protein synthesis, or as a result of ribosome stalling. In terms of biological role, catalyzes the release of premature peptidyl moieties from peptidyl-tRNA molecules trapped in stalled 50S ribosomal subunits, and thus maintains levels of free tRNAs and 50S ribosomes. The protein is Peptidyl-tRNA hydrolase of Borrelia duttonii (strain Ly).